The primary structure comprises 122 residues: Large ribosomal subunit protein uL14 (122 aa).

Belongs to the universal ribosomal protein uL14 family. In terms of assembly, part of the 50S ribosomal subunit. Forms a cluster with proteins L3 and L19. In the 70S ribosome, L14 and L19 interact and together make contacts with the 16S rRNA in bridges B5 and B8.

In terms of biological role, binds to 23S rRNA. Forms part of two intersubunit bridges in the 70S ribosome. This chain is Large ribosomal subunit protein uL14, found in Bacillus subtilis (strain 168).